The primary structure comprises 874 residues: Alanine--tRNA ligase (874 aa).

Zn(2+) is bound by residues histidine 562, histidine 566, cysteine 665, and histidine 669.

It belongs to the class-II aminoacyl-tRNA synthetase family. The cofactor is Zn(2+).

It is found in the cytoplasm. The catalysed reaction is tRNA(Ala) + L-alanine + ATP = L-alanyl-tRNA(Ala) + AMP + diphosphate. Its function is as follows. Catalyzes the attachment of alanine to tRNA(Ala) in a two-step reaction: alanine is first activated by ATP to form Ala-AMP and then transferred to the acceptor end of tRNA(Ala). Also edits incorrectly charged Ser-tRNA(Ala) and Gly-tRNA(Ala) via its editing domain. The protein is Alanine--tRNA ligase of Pseudomonas putida (strain ATCC 47054 / DSM 6125 / CFBP 8728 / NCIMB 11950 / KT2440).